The chain runs to 66 residues: Large ribosomal subunit protein bL33c (66 aa).

Belongs to the bacterial ribosomal protein bL33 family.

Its subcellular location is the plastid. It localises to the chloroplast. This is Large ribosomal subunit protein bL33c from Morus indica (Mulberry).